A 457-amino-acid polypeptide reads, in one-letter code: MSVSVEKRSAWFPPDWDDDERMSFLFSAFKENRDVDCTDWDGKIDFWSPLIIEHCRRCGSVCVNLQDLNENFRRKGSVPLGLSTVIQSMIRSGKVQKESDFAANVDSGWLSWGVGLLLVRPLKWTLSALLGSGRVPLEESFVVIELVKEKAAELLAAYRGSALSARSLLSFQELRSLSSHICPDESTLCMALLQLQREKHVTVSLHEGEKLVKFSQAGQGRVSPVSEVDLGIYQLQCSEKLLEERVEALGHEAEKCKQQAKSLLKEGKKSQALRCLRGSKRVEKKADRLFAQLETVKGILDRIANSQTDRLVMQAYQAGVAALRISLKGVTVERAENLVDQIQELCDTQDEVNQTLASGAPDAGEDSEDLEEELKSLMEKSVPENDLFPAVPTHPITPPRKTDLPDAAFVQFLPSVPNPGMNITDEELDRELRRLTVSDKGLPRESVSPQRRLEPAQ.

2 coiled-coil regions span residues 234 to 266 (QLQC…LLKE) and 331 to 382 (TVER…EKSV). Disordered regions lie at residues 381-401 (SVPE…PPRK) and 435-457 (LTVS…EPAQ).

Belongs to the SNF7 family.

It is found in the cytoplasm. Its subcellular location is the nucleus envelope. In terms of biological role, ESCRT-III-like protein required to recruit the ESCRT-III complex to the nuclear envelope during late anaphase. Together with SPAST, the ESCRT-III complex promotes nuclear envelope sealing and mitotic spindle disassembly during late anaphase. Plays a role in the endosomal sorting pathway. This chain is Charged multivesicular body protein 7 (chmp7), found in Danio rerio (Zebrafish).